We begin with the raw amino-acid sequence, 300 residues long: Epimerase family protein SACOL0834 (300 aa).

It belongs to the NAD(P)-dependent epimerase/dehydratase family. SDR39U1 subfamily.

This chain is Epimerase family protein SACOL0834, found in Staphylococcus aureus (strain COL).